Consider the following 213-residue polypeptide: 3-isopropylmalate dehydratase small subunit (213 aa).

Belongs to the LeuD family. LeuD type 1 subfamily. In terms of assembly, heterodimer of LeuC and LeuD.

It carries out the reaction (2R,3S)-3-isopropylmalate = (2S)-2-isopropylmalate. The protein operates within amino-acid biosynthesis; L-leucine biosynthesis; L-leucine from 3-methyl-2-oxobutanoate: step 2/4. In terms of biological role, catalyzes the isomerization between 2-isopropylmalate and 3-isopropylmalate, via the formation of 2-isopropylmaleate. This Neisseria gonorrhoeae (strain ATCC 700825 / FA 1090) protein is 3-isopropylmalate dehydratase small subunit.